The following is a 141-amino-acid chain: Hemoglobin subunit alpha-A (141 aa).

The 141-residue stretch at 1-141 (VLSSGDKANV…VSTVLTSKYR (141 aa)) folds into the Globin domain. Residue His-58 participates in O2 binding. His-87 is a heme b binding site.

The protein belongs to the globin family. Heterotetramer of two alpha chains and two beta chains. Red blood cells.

Functionally, involved in oxygen transport from the lung to the various peripheral tissues. The chain is Hemoglobin subunit alpha-A (HBAA) from Caretta caretta (Loggerhead sea turtle).